Consider the following 564-residue polypeptide: Proline--tRNA ligase (564 aa).

It belongs to the class-II aminoacyl-tRNA synthetase family. ProS type 1 subfamily. Homodimer.

Its subcellular location is the cytoplasm. It carries out the reaction tRNA(Pro) + L-proline + ATP = L-prolyl-tRNA(Pro) + AMP + diphosphate. Functionally, catalyzes the attachment of proline to tRNA(Pro) in a two-step reaction: proline is first activated by ATP to form Pro-AMP and then transferred to the acceptor end of tRNA(Pro). As ProRS can inadvertently accommodate and process non-cognate amino acids such as alanine and cysteine, to avoid such errors it has two additional distinct editing activities against alanine. One activity is designated as 'pretransfer' editing and involves the tRNA(Pro)-independent hydrolysis of activated Ala-AMP. The other activity is designated 'posttransfer' editing and involves deacylation of mischarged Ala-tRNA(Pro). The misacylated Cys-tRNA(Pro) is not edited by ProRS. The sequence is that of Proline--tRNA ligase from Xanthomonas campestris pv. campestris (strain 8004).